The following is a 101-amino-acid chain: uncharacterized protein (101 aa).

It is found in the plastid. Its subcellular location is the chloroplast. This is an uncharacterized protein from Chlamydomonas reinhardtii (Chlamydomonas smithii).